The chain runs to 312 residues: Methionyl-tRNA formyltransferase (312 aa).

109–112 (SLLP) serves as a coordination point for (6S)-5,6,7,8-tetrahydrofolate.

It belongs to the Fmt family.

The catalysed reaction is L-methionyl-tRNA(fMet) + (6R)-10-formyltetrahydrofolate = N-formyl-L-methionyl-tRNA(fMet) + (6S)-5,6,7,8-tetrahydrofolate + H(+). In terms of biological role, attaches a formyl group to the free amino group of methionyl-tRNA(fMet). The formyl group appears to play a dual role in the initiator identity of N-formylmethionyl-tRNA by promoting its recognition by IF2 and preventing the misappropriation of this tRNA by the elongation apparatus. In Caulobacter sp. (strain K31), this protein is Methionyl-tRNA formyltransferase.